The sequence spans 156 residues: ATP synthase subunit b (156 aa).

The helical transmembrane segment at 7–26 (FIGQMVAFAIFIYLTYRYVW) threads the bilayer.

Belongs to the ATPase B chain family. F-type ATPases have 2 components, F(1) - the catalytic core - and F(0) - the membrane proton channel. F(1) has five subunits: alpha(3), beta(3), gamma(1), delta(1), epsilon(1). F(0) has three main subunits: a(1), b(2) and c(10-14). The alpha and beta chains form an alternating ring which encloses part of the gamma chain. F(1) is attached to F(0) by a central stalk formed by the gamma and epsilon chains, while a peripheral stalk is formed by the delta and b chains.

The protein localises to the cell inner membrane. In terms of biological role, f(1)F(0) ATP synthase produces ATP from ADP in the presence of a proton or sodium gradient. F-type ATPases consist of two structural domains, F(1) containing the extramembraneous catalytic core and F(0) containing the membrane proton channel, linked together by a central stalk and a peripheral stalk. During catalysis, ATP synthesis in the catalytic domain of F(1) is coupled via a rotary mechanism of the central stalk subunits to proton translocation. Functionally, component of the F(0) channel, it forms part of the peripheral stalk, linking F(1) to F(0). This is ATP synthase subunit b from Cellvibrio japonicus (strain Ueda107) (Pseudomonas fluorescens subsp. cellulosa).